Here is a 239-residue protein sequence, read N- to C-terminus: 2-C-methyl-D-erythritol 4-phosphate cytidylyltransferase (239 aa).

Belongs to the IspD/TarI cytidylyltransferase family. IspD subfamily. In terms of assembly, homodimer.

The catalysed reaction is 2-C-methyl-D-erythritol 4-phosphate + CTP + H(+) = 4-CDP-2-C-methyl-D-erythritol + diphosphate. It participates in isoprenoid biosynthesis; isopentenyl diphosphate biosynthesis via DXP pathway; isopentenyl diphosphate from 1-deoxy-D-xylulose 5-phosphate: step 2/6. Catalyzes the formation of 4-diphosphocytidyl-2-C-methyl-D-erythritol from CTP and 2-C-methyl-D-erythritol 4-phosphate (MEP). In Sodalis glossinidius (strain morsitans), this protein is 2-C-methyl-D-erythritol 4-phosphate cytidylyltransferase.